The chain runs to 92 residues: Small integral membrane protein 12 (92 aa).

Residues Tyr15–Phe34 traverse the membrane as a helical segment.

It belongs to the SMIM12 family.

It is found in the membrane. This chain is Small integral membrane protein 12 (SMIM12), found in Canis lupus familiaris (Dog).